The sequence spans 197 residues: Probable GTP-binding protein EngB (197 aa).

In terms of domain architecture, EngB-type G spans 25 to 197; it reads SAPEIAFAGR…VRDEFFKFTR (173 aa). Residues 33–40, 60–64, 79–82, 146–149, and 177–179 each bind GTP; these read GRSNVGKS, GCTRQ, DLPG, TKID, and ISV. Mg(2+) contacts are provided by Ser40 and Thr62.

It belongs to the TRAFAC class TrmE-Era-EngA-EngB-Septin-like GTPase superfamily. EngB GTPase family. Mg(2+) is required as a cofactor.

In terms of biological role, necessary for normal cell division and for the maintenance of normal septation. The protein is Probable GTP-binding protein EngB of Wolbachia sp. subsp. Brugia malayi (strain TRS).